The primary structure comprises 888 residues: 3-hydroxy-3-methylglutaryl-coenzyme A reductase (888 aa).

The Cytoplasmic segment spans residues 1-9; sequence MLSRLFRMH. The chain crosses the membrane as a helical span at residues 10–39; sequence GLFVASHPWEVIVGTVTLTICMMSMNMFTG. The Lumenal portion of the chain corresponds to 40–56; it reads NNKICGWNYECPKLEED. The chain crosses the membrane as a helical span at residues 57–78; the sequence is VLSSDIIILTITRCIAILYIYF. An SSD domain is found at 61–218; the sequence is DIIILTITRC…MTFFPACVSL (158 aa). The INSIG-binding motif signature appears at 75 to 78; the sequence is YIYF. At 79-89 the chain is on the cytoplasmic side; that stretch reads QFQNLRQLGSK. K89 participates in a covalent cross-link: Glycyl lysine isopeptide (Lys-Gly) (interchain with G-Cter in ubiquitin). The helical transmembrane segment at 90–114 threads the bilayer; it reads YILGIAGLFTIFSSFVFSTVVIHFL. Residues 115 to 123 are Lumenal-facing; it reads DKELTGLNE. Residues 124 to 149 traverse the membrane as a helical segment; it reads ALPFFLLLVDLSRASALAKFALSSNS. Topologically, residues 150–159 are cytoplasmic; sequence QDEVRENIAR. The chain crosses the membrane as a helical span at residues 160-187; that stretch reads GMAILGPTFTLDALVECLVIGVGTMSGV. Residues 188 to 191 lie on the Lumenal side of the membrane; it reads RQLE. The helical transmembrane segment at 192–220 threads the bilayer; that stretch reads IMCCFGCMSVLANYFVFMTFFPACVSLVL. The Cytoplasmic portion of the chain corresponds to 221-248; sequence ELSRESREGRPIWQLSHFARVLEEEENK. A Glycyl lysine isopeptide (Lys-Gly) (interchain with G-Cter in ubiquitin) cross-link involves residue K248. Residues 249 to 275 form a helical membrane-spanning segment; the sequence is PNPVTQRVKMIMSLGLVLVHAHSRWIA. Over 276-314 the chain is Lumenal; that stretch reads DPSPQNSTADNSKVSLGLDENVSKRIEPSVSLWQFYLSK. N281 and N296 each carry an N-linked (GlcNAc...) asparagine glycan. A helical membrane pass occupies residues 315–339; the sequence is MISMDIEQVITLSLALLLAVKYIFF. Residues 340–888 lie on the Cytoplasmic side of the membrane; that stretch reads EQAETESTLS…LQGTCTKKAA (549 aa). Residues E559, K691, and D767 each act as charge relay system in the active site. The active-site Proton donor is the H866. S872 is subject to Phosphoserine; by AMPK.

Belongs to the HMG-CoA reductase family. In terms of assembly, homotetramer. Homodimer. Interacts (via its SSD) with INSIG1; the interaction, accelerated by sterols, leads to the recruitment of HMGCR to AMFR/gp78 for its ubiquitination by the sterol-mediated ERAD pathway. Interacts with UBIAD1. In terms of processing, undergoes sterol-mediated ubiquitination and ER-associated degradation (ERAD). Accumulation of sterols in the endoplasmic reticulum (ER) membrane, triggers binding of the reductase to the ER membrane protein INSIG1 or INSIG2. The INSIG1 binding leads to the recruitment of the ubiquitin ligase, AMFR/gp78, RNF139 or RNF145, initiating ubiquitination of the reductase. The ubiquitinated reductase is then extracted from the ER membrane and delivered to cytosolic 26S proteosomes by a mechanism probably mediated by the ATPase Valosin-containing protein VCP/p97. The INSIG2-binding leads to the recruitment of the ubiquitin ligase RNF139, initiating ubiquitination of the reductase. Lys-248 is the main site of ubiquitination. Ubiquitination is enhanced by the presence of a geranylgeranylated protein. N-glycosylated. Deglycosylated by NGLY1 on release from the endoplasmic reticulum (ER) in a sterol-mediated manner. Post-translationally, phosphorylated. Phosphorylation at Ser-872 reduces the catalytic activity.

It is found in the endoplasmic reticulum membrane. It localises to the peroxisome membrane. It catalyses the reaction (R)-mevalonate + 2 NADP(+) + CoA = (3S)-3-hydroxy-3-methylglutaryl-CoA + 2 NADPH + 2 H(+). Its pathway is metabolic intermediate biosynthesis; (R)-mevalonate biosynthesis; (R)-mevalonate from acetyl-CoA: step 3/3. Its activity is regulated as follows. Regulated by a negative feedback mechanism through sterols and non-sterol metabolites derived from mevalonate. Phosphorylation at Ser-872 down-regulates the catalytic activity. Catalyzes the conversion of (3S)-hydroxy-3-methylglutaryl-CoA (HMG-CoA) to mevalonic acid, the rate-limiting step in the synthesis of cholesterol and other isoprenoids, thus plays a critical role in cellular cholesterol homeostasis. The sequence is that of 3-hydroxy-3-methylglutaryl-coenzyme A reductase (HMGCR) from Bos taurus (Bovine).